A 184-amino-acid chain; its full sequence is Holliday junction branch migration complex subunit RuvA (184 aa).

The tract at residues 1 to 64 (MIVAVEGIIT…EDADLLYGFL (64 aa)) is domain I. The segment at 65–145 (DEKEKRMFEM…ANDGEQYKIE (81 aa)) is domain II. Glutamate 145 is a region of interest (flexible linker). The interval 145–184 (ETISALENLGFKRDKINKILLNCKSTNTADLIKEALKKLA) is domain III.

The protein belongs to the RuvA family. In terms of assembly, homotetramer. Forms an RuvA(8)-RuvB(12)-Holliday junction (HJ) complex. HJ DNA is sandwiched between 2 RuvA tetramers; dsDNA enters through RuvA and exits via RuvB. An RuvB hexamer assembles on each DNA strand where it exits the tetramer. Each RuvB hexamer is contacted by two RuvA subunits (via domain III) on 2 adjacent RuvB subunits; this complex drives branch migration. In the full resolvosome a probable DNA-RuvA(4)-RuvB(12)-RuvC(2) complex forms which resolves the HJ.

Its subcellular location is the cytoplasm. Functionally, the RuvA-RuvB-RuvC complex processes Holliday junction (HJ) DNA during genetic recombination and DNA repair, while the RuvA-RuvB complex plays an important role in the rescue of blocked DNA replication forks via replication fork reversal (RFR). RuvA specifically binds to HJ cruciform DNA, conferring on it an open structure. The RuvB hexamer acts as an ATP-dependent pump, pulling dsDNA into and through the RuvAB complex. HJ branch migration allows RuvC to scan DNA until it finds its consensus sequence, where it cleaves and resolves the cruciform DNA. The protein is Holliday junction branch migration complex subunit RuvA of Campylobacter hominis (strain ATCC BAA-381 / DSM 21671 / CCUG 45161 / LMG 19568 / NCTC 13146 / CH001A).